Reading from the N-terminus, the 142-residue chain is Small ribosomal subunit protein uS12 (142 aa).

It belongs to the universal ribosomal protein uS12 family. In terms of assembly, part of the 30S ribosomal subunit.

Functionally, with S4 and S5 plays an important role in translational accuracy. Located at the interface of the 30S and 50S subunits. The protein is Small ribosomal subunit protein uS12 of Methanocorpusculum labreanum (strain ATCC 43576 / DSM 4855 / Z).